The following is a 312-amino-acid chain: Olfactory receptor 1D5 (312 aa).

The Extracellular segment spans residues 1 to 25 (MDGDNQSENSQFLLLGISESPEQQQ). An N-linked (GlcNAc...) asparagine glycan is attached at N5. The helical transmembrane segment at 26–49 (ILFWMFLSMYLVTVLGNVLIILAI) threads the bilayer. Over 50–57 (SSDSRLHT) the chain is Cytoplasmic. Residues 58 to 79 (PMYFFLANLSFTDLFFVTNTIP) form a helical membrane-spanning segment. The Extracellular segment spans residues 80–100 (KMLVNLQSQNKAISYAGCLTQ). The cysteines at positions 97 and 189 are disulfide-linked. Residues 101–120 (LYFLVSLVTLDNLILAVMAY) traverse the membrane as a helical segment. Over 121–140 (DRYVAICCPLHYVTAMSPGL) the chain is Cytoplasmic. A helical transmembrane segment spans residues 141–158 (CVLLLSLCWGLSVFYGLL). Residues 159–196 (LTLLLTRVTFCGPREIHYLFCDMYILLRLACSNTHIIH) are Extracellular-facing. Residues 197–220 (TVLVATGCFIFLTPLGFMTTSYVR) traverse the membrane as a helical segment. The Cytoplasmic segment spans residues 221-237 (IVRTILQIPSASKKYKA). A helical membrane pass occupies residues 238 to 260 (FSTCASHLGVVSLFYGTLAMVYL). The Extracellular segment spans residues 261–271 (QPLHTYSMKDS). Residues 272–291 (VATVMYAVVTPMMNPFIHSL) form a helical membrane-spanning segment. Residues 292 to 312 (RNKDMHGALGRVLRRLFQRPK) lie on the Cytoplasmic side of the membrane.

Belongs to the G-protein coupled receptor 1 family.

The protein resides in the cell membrane. Its function is as follows. Odorant receptor. The sequence is that of Olfactory receptor 1D5 (OR1D5) from Pan troglodytes (Chimpanzee).